The primary structure comprises 151 residues: MAQTIYVLNGPNLNLLGTREPEIYGRATLADVEKLCAETAAGFGLVAVCRQSNHEGQLIDWIHQARSEKVAGLVINAGGYTHTSIALHDALVGVQIPTVEVHVSNVFAREDFRHHSFIAKAAFASLCGFGIDGYRLAITGLAAKLGASATA.

The active-site Proton acceptor is the Y24. The substrate site is built by N76, H82, and D89. The Proton donor role is filled by H102. Residues 103–104 (VS) and R113 each bind substrate.

The protein belongs to the type-II 3-dehydroquinase family. In terms of assembly, homododecamer.

It catalyses the reaction 3-dehydroquinate = 3-dehydroshikimate + H2O. It functions in the pathway metabolic intermediate biosynthesis; chorismate biosynthesis; chorismate from D-erythrose 4-phosphate and phosphoenolpyruvate: step 3/7. In terms of biological role, catalyzes a trans-dehydration via an enolate intermediate. This chain is 3-dehydroquinate dehydratase, found in Rhodopseudomonas palustris (strain TIE-1).